Consider the following 149-residue polypeptide: Transcriptional repressor NrdR (149 aa).

A zinc finger lies at 3–34 (CPFCGFEESKVVDSRSTDDNTTIRRRRECLKC). One can recognise an ATP-cone domain in the interval 49–139 (ILVIKKDLTR…VYRQFKDIDT (91 aa)).

Belongs to the NrdR family. The cofactor is Zn(2+).

In terms of biological role, negatively regulates transcription of bacterial ribonucleotide reductase nrd genes and operons by binding to NrdR-boxes. This is Transcriptional repressor NrdR from Clostridium beijerinckii (strain ATCC 51743 / NCIMB 8052) (Clostridium acetobutylicum).